An 822-amino-acid chain; its full sequence is Valine--tRNA ligase (822 aa).

The 'HIGH' region motif lies at 41–51; sequence PNVTGQLHLGH. The 'KMSKS' region motif lies at 511-515; that stretch reads KMSKS. ATP is bound at residue K514. Residues 765–822 adopt a coiled-coil conformation; that stretch reads EQKGRELKEIQFLKSEILRAEKILTNKGFLEKAPREKIDLERTKLEKLKEKLAFYEKK.

This sequence belongs to the class-I aminoacyl-tRNA synthetase family. ValS type 1 subfamily. In terms of assembly, monomer.

It localises to the cytoplasm. It catalyses the reaction tRNA(Val) + L-valine + ATP = L-valyl-tRNA(Val) + AMP + diphosphate. Functionally, catalyzes the attachment of valine to tRNA(Val). As ValRS can inadvertently accommodate and process structurally similar amino acids such as threonine, to avoid such errors, it has a 'posttransfer' editing activity that hydrolyzes mischarged Thr-tRNA(Val) in a tRNA-dependent manner. The sequence is that of Valine--tRNA ligase from Mesomycoplasma hyopneumoniae (strain 7448) (Mycoplasma hyopneumoniae).